The following is a 396-amino-acid chain: Tyrosine--tRNA ligase (396 aa).

An L-tyrosine-binding site is contributed by tyrosine 36. A 'HIGH' region motif is present at residues 41–50 (PTANSLHIGN). L-tyrosine-binding residues include tyrosine 165 and glutamine 169. Positions 225–229 (KMGKT) match the 'KMSKS' region motif. Lysine 228 lines the ATP pocket. In terms of domain architecture, S4 RNA-binding spans 331–394 (TNLIDYLVET…KKSFLTIKTV (64 aa)).

Belongs to the class-I aminoacyl-tRNA synthetase family. TyrS type 1 subfamily. As to quaternary structure, homodimer.

The protein localises to the cytoplasm. The enzyme catalyses tRNA(Tyr) + L-tyrosine + ATP = L-tyrosyl-tRNA(Tyr) + AMP + diphosphate + H(+). Functionally, catalyzes the attachment of tyrosine to tRNA(Tyr) in a two-step reaction: tyrosine is first activated by ATP to form Tyr-AMP and then transferred to the acceptor end of tRNA(Tyr). This Mycoplasma genitalium (strain ATCC 33530 / DSM 19775 / NCTC 10195 / G37) (Mycoplasmoides genitalium) protein is Tyrosine--tRNA ligase.